The following is a 140-amino-acid chain: Arsenate reductase (140 aa).

Cysteine 11 functions as the Nucleophile; cysteine thioarsenate intermediate in the catalytic mechanism.

It belongs to the ArsC family.

The catalysed reaction is [glutaredoxin]-dithiol + arsenate + glutathione + H(+) = glutathionyl-S-S-[glutaredoxin] + arsenite + H2O. Involved in resistance to arsenate. Catalyzes the reduction of arsenate [As(V)] to arsenite [As(III)]. The resulting arsenite is then extruded from the cell via the aquaglyceroporin AqpS. Does not display antimonate reductase activity. This Rhizobium meliloti (strain 1021) (Ensifer meliloti) protein is Arsenate reductase.